A 397-amino-acid chain; its full sequence is Decapping and exoribonuclease protein (397 aa).

A compositionally biased stretch (basic residues) spans methionine 1 to alanine 10. The disordered stretch occupies residues methionine 1–arginine 30. Residues arginine 58, glutamate 101, and tryptophan 131–glycine 133 each bind substrate. Position 185 (methionine 185) interacts with adenosine 3',5'-bisphosphate. Glutamate 192 provides a ligand contact to Mg(2+). Positions 217 and 234 each coordinate substrate. 4 residues coordinate Mg(2+): glutamate 234, aspartate 236, glutamate 253, and leucine 254. Aspartate 236 serves as a coordination point for adenosine 3',5'-bisphosphate. The interval glutamate 253–threonine 256 is adenosine 3',5'-bisphosphate; inhibitor. Substrate-binding residues include lysine 255 and glutamine 280. Glutamine 280 lines the adenosine 3',5'-bisphosphate pocket. Threonine 392 bears the Phosphothreonine mark. Serine 394 is modified (phosphoserine).

The protein belongs to the DXO/Dom3Z family. Requires Mg(2+) as cofactor.

The protein resides in the nucleus. The catalysed reaction is a 5'-end triphospho-ribonucleoside in mRNA + H2O = a 5'-end phospho-ribonucleoside in mRNA + diphosphate + H(+). It catalyses the reaction a 5'-end NAD(+)-phospho-ribonucleoside in mRNA + H2O = a 5'-end phospho-ribonucleoside in mRNA + NAD(+) + H(+). The enzyme catalyses a 5'-end NAD(+)-phospho-ribonucleoside in snoRNA + H2O = a 5'-end phospho-ribonucleoside in snoRNA + NAD(+) + H(+). It carries out the reaction a 5'-end (N(7)-methyl 5'-triphosphoguanosine)-ribonucleoside-ribonucleotide in mRNA + H2O = a (N(7)-methyl 5'-triphosphoguanosine)-nucleoside + a 5'-end phospho-ribonucleoside in mRNA + H(+). The catalysed reaction is a 5'-end FAD-phospho-ribonucleoside in mRNA + H2O = a 5'-end phospho-ribonucleoside in mRNA + FAD + H(+). It catalyses the reaction a 5'-end CoA-ribonucleoside in mRNA + H2O = 3'-dephospho-CoA + a 5'-end phospho-ribonucleoside in mRNA + H(+). Its activity is regulated as follows. The 5'-3' exoribonuclease activity is inhibited by adenosine 3',5'-bisphosphate. Decapping enzyme for NAD-capped RNAs: specifically hydrolyzes the nicotinamide adenine dinucleotide (NAD) cap from a subset of RNAs by removing the entire NAD moiety from the 5'-end of an NAD-capped RNA. The NAD-cap is present at the 5'-end of some RNAs and snoRNAs. In contrast to the canonical 5'-end N7 methylguanosine (m7G) cap, the NAD cap promotes mRNA decay. Preferentially acts on NAD-capped transcripts in response to environmental stress. Also acts as a non-canonical decapping enzyme that removes the entire cap structure of m7G capped or incompletely capped RNAs and mediates their subsequent degradation. Specifically degrades pre-mRNAs with a defective 5'-end m7G cap and is part of a pre-mRNA capping quality control. Has decapping activity toward incomplete 5'-end m7G cap mRNAs such as unmethylated 5'-end-capped RNA (cap0), while it has no activity toward 2'-O-ribose methylated m7G cap (cap1). In contrast to canonical decapping enzymes DCP2 and NUDT16, which cleave the cap within the triphosphate linkage, the decapping activity releases the entire cap structure GpppN and a 5'-end monophosphate RNA. Also has 5'-3' exoribonuclease activities: The 5'-end monophosphate RNA is then degraded by the 5'-3' exoribonuclease activity, enabling this enzyme to decap and degrade incompletely capped mRNAs. Also possesses RNA 5'-pyrophosphohydrolase activity by hydrolyzing the 5'-end triphosphate to release pyrophosphates. Exhibits decapping activity towards FAD-capped RNAs. Exhibits decapping activity towards dpCoA-capped RNAs in vitro. This Mus musculus (Mouse) protein is Decapping and exoribonuclease protein.